The following is a 458-amino-acid chain: MTIDINKLKEELGLGDLAKSLEGLTAAQKAQEAERMRKEQEEKELARMNDLVSKAVGEDRKRLEEALELVKSLDEKSKKSNELFAQTVEKQQETIVGLQDEIKSLLTAREGRSFVGDSVAKALYGTQENFEDEVEKLVLLSYVMEKGVFETEHGQRHLKAVNQSSSVEVSSESYETIFSQRIIRDLQKELVVGALFEELPMSSKILTMLVEPDAGKATWVAASTYGTDTTTGEEVKGALKEIHFSTYKLAAKSFITDETEEDAIFSLLPLLRKRLIEAHAVSIEEAFMTGDGSGKPKGLLTLASEDSAKVVTEAKADGSVLVTAKTISKLRRKLGRHGLKLSKLVLIVSMDAYYDLLEDEEWQDVAQVGNDSVKLQGQVGRIYGLPVVVSEYFPAKANSAEFAVIVYKDNFVMPRQRAVTVERERQAGKQRDAYYVTQRVNLQRYFANGVVSGTYAAS.

The stretch at 21–110 (LEGLTAAQKA…EIKSLLTARE (90 aa)) forms a coiled coil.

Belongs to the HK97 phage major capsid protein family. In terms of assembly, interacts with the decoration protein; each hexon binds a single copy of the decoration protein. Interacts with the portal protein. Post-translationally, the scaffolding domain delta is cleaved by the prohead protease and lost after assembly. The major capsid protein precursors together with both the portal complex and the maturation protease form prohead I. All copies of the major capsid protein precursor are cleaved to the mature major capsid protein by release of the scaffolding domain delta, yielding the metastable prohead II.

It is found in the virion. Its function is as follows. Major capsid protein that self-associates to form 120 hexamers and 11 pentamers, building the T=13 icosahedral capsid which about 860 Angstroms in diameter. Responsible for its self-assembly into a procapsid. The phage does not need to encode a separate scaffolfing protein because its capsid protein contains the delta domain that carries that function. The capsid gains its final stability through the reorganization of the subunits that takes place upon expansion. DNA encapsidation through the portal triggers capsid expansion and the binding of the decoration protein to the capsid exterior. Might play a role in counteracting the host Pycsar defense system that is mediated by pyrimidine cyclases and leads to abortive infection. The protein is Major capsid protein of Escherichia coli (Enterobacteria phage T5).